The following is a 250-amino-acid chain: Phosphoribosylaminoimidazole-succinocarboxamide synthase (250 aa).

This sequence belongs to the SAICAR synthetase family.

It carries out the reaction 5-amino-1-(5-phospho-D-ribosyl)imidazole-4-carboxylate + L-aspartate + ATP = (2S)-2-[5-amino-1-(5-phospho-beta-D-ribosyl)imidazole-4-carboxamido]succinate + ADP + phosphate + 2 H(+). The protein operates within purine metabolism; IMP biosynthesis via de novo pathway; 5-amino-1-(5-phospho-D-ribosyl)imidazole-4-carboxamide from 5-amino-1-(5-phospho-D-ribosyl)imidazole-4-carboxylate: step 1/2. The sequence is that of Phosphoribosylaminoimidazole-succinocarboxamide synthase from Bifidobacterium adolescentis (strain ATCC 15703 / DSM 20083 / NCTC 11814 / E194a).